The chain runs to 455 residues: Bifunctional protein GlmU (455 aa).

The segment at 1–227 (MGLSVIILAA…CEEVQGVNDR (227 aa)) is pyrophosphorylase. Residues 8 to 11 (LAAG), lysine 22, glutamine 73, 78 to 79 (GT), 100 to 102 (YGD), glycine 137, glutamate 152, asparagine 167, and asparagine 225 contribute to the UDP-N-acetyl-alpha-D-glucosamine site. Residue aspartate 102 participates in Mg(2+) binding. Residue asparagine 225 participates in Mg(2+) binding. A linker region spans residues 228 to 248 (WELTKLERYYQRLMAKKLSLA). An N-acetyltransferase region spans residues 249–455 (GVTIIDPERF…KGWHRPTKKE (207 aa)). Residues arginine 332 and lysine 350 each coordinate UDP-N-acetyl-alpha-D-glucosamine. The Proton acceptor role is filled by histidine 362. UDP-N-acetyl-alpha-D-glucosamine is bound by residues tyrosine 365 and asparagine 376. Acetyl-CoA-binding positions include alanine 379, 385 to 386 (NY), serine 404, alanine 422, and arginine 439.

It in the N-terminal section; belongs to the N-acetylglucosamine-1-phosphate uridyltransferase family. The protein in the C-terminal section; belongs to the transferase hexapeptide repeat family. As to quaternary structure, homotrimer. Requires Mg(2+) as cofactor.

It localises to the cytoplasm. The enzyme catalyses alpha-D-glucosamine 1-phosphate + acetyl-CoA = N-acetyl-alpha-D-glucosamine 1-phosphate + CoA + H(+). The catalysed reaction is N-acetyl-alpha-D-glucosamine 1-phosphate + UTP + H(+) = UDP-N-acetyl-alpha-D-glucosamine + diphosphate. It participates in nucleotide-sugar biosynthesis; UDP-N-acetyl-alpha-D-glucosamine biosynthesis; N-acetyl-alpha-D-glucosamine 1-phosphate from alpha-D-glucosamine 6-phosphate (route II): step 2/2. The protein operates within nucleotide-sugar biosynthesis; UDP-N-acetyl-alpha-D-glucosamine biosynthesis; UDP-N-acetyl-alpha-D-glucosamine from N-acetyl-alpha-D-glucosamine 1-phosphate: step 1/1. It functions in the pathway bacterial outer membrane biogenesis; LPS lipid A biosynthesis. In terms of biological role, catalyzes the last two sequential reactions in the de novo biosynthetic pathway for UDP-N-acetylglucosamine (UDP-GlcNAc). The C-terminal domain catalyzes the transfer of acetyl group from acetyl coenzyme A to glucosamine-1-phosphate (GlcN-1-P) to produce N-acetylglucosamine-1-phosphate (GlcNAc-1-P), which is converted into UDP-GlcNAc by the transfer of uridine 5-monophosphate (from uridine 5-triphosphate), a reaction catalyzed by the N-terminal domain. This Coxiella burnetii (strain CbuK_Q154) (Coxiella burnetii (strain Q154)) protein is Bifunctional protein GlmU.